The following is a 577-amino-acid chain: Multidrug transporter TPO1_2 (577 aa).

Positions 1–63 are disordered; that stretch reads MSSTSSDRPY…ALSKNSTQTS (63 aa). 2 N-linked (GlcNAc...) asparagine glycosylation sites follow: Asn44 and Asn58. Helical transmembrane passes span 137–157, 167–187, 204–224, 234–254, 263–283, 293–313, 368–388, 406–426, 446–466, 475–495, 504–526, and 541–561; these read VMLC…SSIF, IYHV…LGFA, GVLV…ATAK, FFAG…FADM, AICL…VIGS, WLEY…LFFF, PLLL…YLLL, ELPY…IWWM, LLPM…FCWT, WIVP…IFLP, YLLI…GAAF, and YAGL…LLFL.

The protein belongs to the major facilitator superfamily. DHA1 family. Polyamines/proton antiporter (TC 2.A.1.2.16) subfamily.

It is found in the cell membrane. Functionally, multidrug resistance transporter involved in resistance to azole antifungal drugs such as the imidazoles miconazole, ketoconazole, and tioconazole; as well as the triazoles itraconazole and fluconazole. Also plays a role in the resistance to other antifungal drug families such as the polyene amphotericin B, the pyrimide analog flucytosine, the fungicide mancozeb, and the polyamine spermine. Decreases the intracellular accumulation of clotrimazole by mediating its extrusion from cells. Plays a role in biofilm formation. This Candida glabrata (strain ATCC 2001 / BCRC 20586 / JCM 3761 / NBRC 0622 / NRRL Y-65 / CBS 138) (Yeast) protein is Multidrug transporter TPO1_2.